We begin with the raw amino-acid sequence, 305 residues long: Homeobox protein NANOGP8 (305 aa).

The interval 1–96 (MSVDPACPQS…KEDKVPVKKQ (96 aa)) is disordered. The span at 65–82 (SPDSSTSPKGKQPTSAEN) shows a compositional bias: polar residues. Residues 95 to 154 (KQKTRTVFSSTQLCVLNDRFQRQKYLSLQQMQELSNILNLSYKQVKTWFQNQRMKSKRWQ) constitute a DNA-binding region (homeobox). 8 consecutive repeat copies span residues 196–200 (WSNQT), 201–205 (WNNST), 206–210 (WSNQT), 216–220 (WSNHS), 221–225 (WNTQT), 226–230 (WCTQS), 231–235 (WNNQA), and 236–240 (WNSPF). Positions 196-240 (WSNQTWNNSTWSNQTQNIQSWSNHSWNTQTWCTQSWNNQAWNSPF) are 8 X repeats starting with a Trp in each unit. The sufficient for transactivation activity stretch occupies residues 196–240 (WSNQTWNNSTWSNQTQNIQSWSNHSWNTQTWCTQSWNNQAWNSPF). The interval 241–305 (YNCGEESLQS…YSMNMQPEDV (65 aa)) is sufficient for strong transactivation activity.

This sequence belongs to the Nanog homeobox family.

Its subcellular location is the nucleus. Functionally, may act as a transcription regulator. When overexpressed, promotes entry of cells into S phase and cell proliferation. This chain is Homeobox protein NANOGP8 (NANOGP8), found in Homo sapiens (Human).